A 1454-amino-acid polypeptide reads, in one-letter code: Probable cleavage and polyadenylation specificity factor subunit 1 (1454 aa).

Positions 736–765 (KQSNTRKRKRLGHDAIQSSRGGEQSDAIDP) are disordered.

The protein belongs to the CPSF1 family. As to quaternary structure, CPSF is a heterotetramer composed of four distinct subunits 160 (cpsf-1), 100 (cpsf-2), 70 (cpsf-3), and 30 kDa (cpsf-4).

The protein resides in the nucleus. Functionally, CPSF plays a key role in pre-mRNA 3'-end formation, recognizing the AAUAAA signal sequence and interacting with poly(A)polymerase and other factors to bring about cleavage and poly(A) addition. This subunit is involved in the RNA recognition step of the polyadenylation reaction. The protein is Probable cleavage and polyadenylation specificity factor subunit 1 (cpsf-1) of Caenorhabditis elegans.